Here is a 190-residue protein sequence, read N- to C-terminus: GTP cyclohydrolase 1 (190 aa).

Zn(2+) contacts are provided by cysteine 75, histidine 78, and cysteine 146.

It belongs to the GTP cyclohydrolase I family. Toroid-shaped homodecamer, composed of two pentamers of five dimers.

It carries out the reaction GTP + H2O = 7,8-dihydroneopterin 3'-triphosphate + formate + H(+). It functions in the pathway cofactor biosynthesis; 7,8-dihydroneopterin triphosphate biosynthesis; 7,8-dihydroneopterin triphosphate from GTP: step 1/1. The protein is GTP cyclohydrolase 1 of Campylobacter curvus (strain 525.92).